The sequence spans 279 residues: Thymidylate synthase (279 aa).

Residue 141–142 (RR) participates in dUMP binding. The active-site Nucleophile is the C161. DUMP is bound by residues 181–184 (RSND), N192, and 222–224 (HVY). (6R)-5,10-methylene-5,6,7,8-tetrahydrofolate is bound at residue D184. A278 contributes to the (6R)-5,10-methylene-5,6,7,8-tetrahydrofolate binding site.

The protein belongs to the thymidylate synthase family. Bacterial-type ThyA subfamily. Homodimer.

Its subcellular location is the cytoplasm. It carries out the reaction dUMP + (6R)-5,10-methylene-5,6,7,8-tetrahydrofolate = 7,8-dihydrofolate + dTMP. It functions in the pathway pyrimidine metabolism; dTTP biosynthesis. Catalyzes the reductive methylation of 2'-deoxyuridine-5'-monophosphate (dUMP) to 2'-deoxythymidine-5'-monophosphate (dTMP) while utilizing 5,10-methylenetetrahydrofolate (mTHF) as the methyl donor and reductant in the reaction, yielding dihydrofolate (DHF) as a by-product. This enzymatic reaction provides an intracellular de novo source of dTMP, an essential precursor for DNA biosynthesis. The protein is Thymidylate synthase of Bacillus subtilis subsp. natto.